The chain runs to 337 residues: tRNA N6-adenosine threonylcarbamoyltransferase (337 aa).

Positions 107 and 111 each coordinate Fe cation. Substrate contacts are provided by residues 129–133 (LISGG), Asp-162, Gly-175, and Asn-271. Asp-299 serves as a coordination point for Fe cation.

Belongs to the KAE1 / TsaD family. The cofactor is Fe(2+).

The protein resides in the cytoplasm. It carries out the reaction L-threonylcarbamoyladenylate + adenosine(37) in tRNA = N(6)-L-threonylcarbamoyladenosine(37) in tRNA + AMP + H(+). Its function is as follows. Required for the formation of a threonylcarbamoyl group on adenosine at position 37 (t(6)A37) in tRNAs that read codons beginning with adenine. Is involved in the transfer of the threonylcarbamoyl moiety of threonylcarbamoyl-AMP (TC-AMP) to the N6 group of A37, together with TsaE and TsaB. TsaD likely plays a direct catalytic role in this reaction. The chain is tRNA N6-adenosine threonylcarbamoyltransferase from Sulfurovum sp. (strain NBC37-1).